A 298-amino-acid polypeptide reads, in one-letter code: Ribosomal protein L11 methyltransferase (298 aa).

Positions 152, 173, 195, and 234 each coordinate S-adenosyl-L-methionine.

This sequence belongs to the methyltransferase superfamily. PrmA family.

The protein localises to the cytoplasm. It catalyses the reaction L-lysyl-[protein] + 3 S-adenosyl-L-methionine = N(6),N(6),N(6)-trimethyl-L-lysyl-[protein] + 3 S-adenosyl-L-homocysteine + 3 H(+). Its function is as follows. Methylates ribosomal protein L11. The polypeptide is Ribosomal protein L11 methyltransferase (Ralstonia pickettii (strain 12J)).